The sequence spans 172 residues: 3-hydroxydecanoyl-[acyl-carrier-protein] dehydratase (172 aa).

H71 is a catalytic residue.

It belongs to the thioester dehydratase family. FabA subfamily. Homodimer.

It localises to the cytoplasm. It catalyses the reaction a (3R)-hydroxyacyl-[ACP] = a (2E)-enoyl-[ACP] + H2O. It carries out the reaction (3R)-hydroxydecanoyl-[ACP] = (2E)-decenoyl-[ACP] + H2O. The catalysed reaction is (2E)-decenoyl-[ACP] = (3Z)-decenoyl-[ACP]. The protein operates within lipid metabolism; fatty acid biosynthesis. Necessary for the introduction of cis unsaturation into fatty acids. Catalyzes the dehydration of (3R)-3-hydroxydecanoyl-ACP to E-(2)-decenoyl-ACP and then its isomerization to Z-(3)-decenoyl-ACP. Can catalyze the dehydratase reaction for beta-hydroxyacyl-ACPs with saturated chain lengths up to 16:0, being most active on intermediate chain length. In Aliivibrio fischeri (strain ATCC 700601 / ES114) (Vibrio fischeri), this protein is 3-hydroxydecanoyl-[acyl-carrier-protein] dehydratase.